Reading from the N-terminus, the 486-residue chain is Glutamate--tRNA ligase (486 aa).

Residues 11 to 21 (PSPTGLLHIGN) carry the 'HIGH' region motif. Positions 255–259 (KLSKR) match the 'KMSKS' region motif. Residue lysine 258 coordinates ATP.

Belongs to the class-I aminoacyl-tRNA synthetase family. Glutamate--tRNA ligase type 1 subfamily. As to quaternary structure, monomer.

The protein localises to the cytoplasm. It catalyses the reaction tRNA(Glu) + L-glutamate + ATP = L-glutamyl-tRNA(Glu) + AMP + diphosphate. Its function is as follows. Catalyzes the attachment of glutamate to tRNA(Glu) in a two-step reaction: glutamate is first activated by ATP to form Glu-AMP and then transferred to the acceptor end of tRNA(Glu). The protein is Glutamate--tRNA ligase of Streptococcus pneumoniae serotype 19F (strain G54).